Consider the following 1227-residue polypeptide: RNA-binding protein 20 (1227 aa).

Disordered stretches follow at residues 1 to 58 and 289 to 374; these read MVLA…QAGL and GSHV…SKQG. A compositionally biased stretch (low complexity) spans 27–42; it reads PGARASPAPSGPRGMQ. Residues 43 to 56 are compositionally biased toward pro residues; sequence QPPPPPQPPPPPQA. Polar residues predominate over residues 313–331; that stretch reads QGTNSQWESPHGFSGQSKP. Residues 409–443 form a U1-type zinc finger; it reads HLPHICSICDKKVFDLKDWELHVKGKLHAQKCLVF. Ser-498 carries the post-translational modification Phosphoserine. Residues 518–593 form the RRM domain; the sequence is RVVHICNLPE…EKLLIRMSKR (76 aa). Residues 624-634 are compositionally biased toward basic and acidic residues; sequence EADRYGPERPR. Disordered stretches follow at residues 624–906 and 977–1089; these read EADR…TNME and SLKS…ASPP. The RS stretch occupies residues 628–655; the sequence is YGPERPRSRSPVSRSLSPRSHTPSFTSC. 6 positions are modified to phosphoserine: Ser-635, Ser-637, Ser-640, Ser-642, Ser-660, and Ser-679. Over residues 636–660 the composition is skewed to low complexity; the sequence is RSPVSRSLSPRSHTPSFTSCSSSHS. Basic and acidic residues-rich tracts occupy residues 674 to 709 and 716 to 738; these read DSWE…PWAH and RQLD…EKYP. Polar residues predominate over residues 741–752; the sequence is GSPNLPHSVSSY. Residue Ser-742 is modified to Phosphoserine. Composition is skewed to basic and acidic residues over residues 753 to 772, 784 to 807, and 816 to 856; these read KSRE…DKYL, RKDE…EDGL, and EGAK…KEEQ. Ser-801 carries the phosphoserine modification. Phosphoserine is present on residues Ser-865, Ser-876, Ser-891, Ser-893, Ser-977, Ser-980, and Ser-1013. The span at 868 to 888 shows a compositional bias: basic and acidic residues; sequence RQEKEAEFSDPENTRTKKEQD. Basic and acidic residues predominate over residues 1024-1036; that stretch reads CYEKEAKGVESSD. A phosphoserine mark is found at Ser-1048, Ser-1060, Ser-1080, Ser-1115, and Ser-1120. Residues 1161-1192 form a Matrin-type zinc finger; the sequence is FYCKLCGLFYTSEETAKMSHCRSAVHYRNLQK. Over residues 1201-1215 the composition is skewed to basic and acidic residues; it reads GLKETEGADSPRPED. Residues 1201-1227 form a disordered region; that stretch reads GLKETEGADSPRPEDSGIVPRFERKKL. Phosphoserine is present on Ser-1210.

As to quaternary structure, associates with components of the U1 and U2 U1 small nuclear ribonucleoprotein complexes. Post-translationally, phosphorylation regulates the subcellular localization. Phosphorylation of Ser-635 and Ser-637 in the RS (arginine/serine-rich) region promotes nuclear localization of the protein. In contrast, phosphorylation of the C-terminal disordered region promotes localization to cytoplasmic ribonucleoprotein granules. Mainly expressed in the heart. Also expressed in skeletal muscle tissues, ovary, small intestine and colon.

It is found in the nucleus. The protein localises to the cytoplasm. It localises to the cytoplasmic ribonucleoprotein granule. Functionally, RNA-binding protein that acts as a regulator of mRNA splicing of a subset of genes encoding key structural proteins involved in cardiac development, such as TTN (Titin), CACNA1C, CAMK2D or PDLIM5/ENH. Acts as a repressor of mRNA splicing: specifically binds the 5'UCUU-3' motif that is predominantly found within intronic sequences of pre-mRNAs, leading to the exclusion of specific exons in target transcripts. RBM20-mediated exon skipping is hormone-dependent and is essential for TTN isoform transition in both cardiac and skeletal muscles. RBM20-mediated exon skipping of TTN provides substrates for the formation of circular RNA (circRNAs) from the TTN transcripts. Together with RBM24, promotes the expression of short isoforms of PDLIM5/ENH in cardiomyocytes. This chain is RNA-binding protein 20, found in Homo sapiens (Human).